A 323-amino-acid chain; its full sequence is Phosphatidylethanolamine:ceramide ethanolaminephosphotransferase (323 aa).

At 1–26 the chain is on the cytoplasmic side; that stretch reads MAVPPVEMYSGSFWNRMRKPLPLRTQ. The chain crosses the membrane as a helical span at residues 27 to 47; it reads VIRFTVVFVIVSFILVVALQI. At 48-74 the chain is on the extracellular side; it reads THERMPDPKVTKPLPDLGFELLTKVPG. The chain crosses the membrane as a helical span at residues 75-95; the sequence is MYVLADCCIGFLNILSVFTAF. At 96–147 the chain is on the cytoplasmic side; that stretch reads KLYLLHRHCVGSGEPELPCNIPGVSRFFLSVWLCKENCRIELRNIHTIAWIR. The helical transmembrane segment at 148 to 168 threads the bilayer; that stretch reads FITSYALLLLSRSIIMVVTSL. Topologically, residues 169–187 are extracellular; sequence PNPDDLCQNPPKIENRVKD. Residues 188–208 traverse the membrane as a helical segment; it reads ILLTVLTAGAGSIHCGDLMYS. The Cytoplasmic segment spans residues 209–233; that stretch reads GHTVILTLHLMFHWIYGAMVHWSFR. The helical transmembrane segment at 234–254 threads the bilayer; the sequence is PVVTVVAIFGYYCIVASRFHY. Residues 255-257 lie on the Extracellular side of the membrane; that stretch reads TDD. The helical transmembrane segment at 258-278 threads the bilayer; the sequence is VLVAIYLTIATFIAVGHNADG. Topologically, residues 279 to 323 are cytoplasmic; that stretch reads APWQLQLFIRWWPCCGANSREVAEDGVPVAIVIKNEEMMNFEGKS.

It belongs to the sphingomyelin synthase family.

Its subcellular location is the membrane. It carries out the reaction an N-acylsphing-4-enine + a 1,2-diacyl-sn-glycero-3-phosphoethanolamine = an N-acylsphing-4-enine 1-phosphoethanolamine + a 1,2-diacyl-sn-glycerol. The enzyme catalyses an N-acylsphinganine + a 1,2-diacyl-sn-glycero-3-phosphoethanolamine = an N-acylsphinganine-1-phosphoethanolamine + a 1,2-diacyl-sn-glycerol. Functionally, predominantly synthesizes ethanolamine-phosphorylceramide (EPC), with minimal sphingomyelin (SM)/inositol phosphorylceramide (IPC) synthase activity. Specificity is likely to be defined by residues in the lumenal catalytic domain that interact with the polar head groups of the phospholipid donors. EPC is synthesized by both stages of the parasite life cycle, bloodstream forms (BSF) and procyclic forms (PCF), by transferring the phosphoethanolamine from a 1,2-diacyl-sn-glycero-3-phosphoethanolamine to an N-acylsphing-4-enine (ceramide) or an N-acylsphinganine (dihydroceramide). Similarly, SM is synthesized by transferring the phosphocholine from a 1,2-diacyl-sn-glycero-3-phosphocholine to ceramide or dihydroceramide by BSF and PCF, while IPC is confined to PCF. The ceramide/dihydroceramide ratios are skewed towards dihydroceramide in PCF parasites and ceramide in BSF parasites, this is likely due to differential expression and/or regulation of dihydroceramide desaturase, the enzyme responsible for converting dihydroceramide to ceramide. The sequence is that of Phosphatidylethanolamine:ceramide ethanolaminephosphotransferase from Trypanosoma brucei brucei.